An 88-amino-acid polypeptide reads, in one-letter code: Small ribosomal subunit protein bS20 (88 aa).

The segment at 69–88 is disordered; it reads KNTASRKKSRLTKRFNKLTG. The segment covering 71-88 has biased composition (basic residues); that stretch reads TASRKKSRLTKRFNKLTG.

Belongs to the bacterial ribosomal protein bS20 family.

Functionally, binds directly to 16S ribosomal RNA. The polypeptide is Small ribosomal subunit protein bS20 (Pelotomaculum thermopropionicum (strain DSM 13744 / JCM 10971 / SI)).